Reading from the N-terminus, the 338-residue chain is L-serine dehydratase (338 aa).

Position 39 is an N6-(pyridoxal phosphate)lysine (K39).

Belongs to the serine/threonine dehydratase family. Pyridoxal 5'-phosphate serves as cofactor.

It is found in the cytoplasm. It carries out the reaction L-serine = pyruvate + NH4(+). It participates in carbohydrate biosynthesis; gluconeogenesis. This chain is L-serine dehydratase (SDL1), found in Saccharomyces cerevisiae (strain YJM789) (Baker's yeast).